The chain runs to 431 residues: Glutamate-1-semialdehyde 2,1-aminomutase (431 aa).

Residue Lys265 is modified to N6-(pyridoxal phosphate)lysine.

The protein belongs to the class-III pyridoxal-phosphate-dependent aminotransferase family. HemL subfamily. In terms of assembly, homodimer. Pyridoxal 5'-phosphate is required as a cofactor.

It localises to the cytoplasm. The catalysed reaction is (S)-4-amino-5-oxopentanoate = 5-aminolevulinate. Its pathway is porphyrin-containing compound metabolism; protoporphyrin-IX biosynthesis; 5-aminolevulinate from L-glutamyl-tRNA(Glu): step 2/2. The chain is Glutamate-1-semialdehyde 2,1-aminomutase from Pseudoalteromonas atlantica (strain T6c / ATCC BAA-1087).